The following is a 97-amino-acid chain: Large ribosomal subunit protein uL23 (97 aa).

The protein belongs to the universal ribosomal protein uL23 family. In terms of assembly, part of the 50S ribosomal subunit. Contacts protein L29, and trigger factor when it is bound to the ribosome.

Functionally, one of the early assembly proteins it binds 23S rRNA. One of the proteins that surrounds the polypeptide exit tunnel on the outside of the ribosome. Forms the main docking site for trigger factor binding to the ribosome. This chain is Large ribosomal subunit protein uL23, found in Mesorhizobium japonicum (strain LMG 29417 / CECT 9101 / MAFF 303099) (Mesorhizobium loti (strain MAFF 303099)).